A 394-amino-acid chain; its full sequence is Tubulin-like protein CetZ5 (394 aa).

Residues 10-14, 110-112, Glu142, Asn169, and Asn187 contribute to the GTP site; these read QAGGN and GTG.

This sequence belongs to the CetZ family.

Its subcellular location is the cytoplasm. In terms of biological role, involved in cell shape control. The polypeptide is Tubulin-like protein CetZ5 (Haloferax volcanii (strain ATCC 29605 / DSM 3757 / JCM 8879 / NBRC 14742 / NCIMB 2012 / VKM B-1768 / DS2) (Halobacterium volcanii)).